The primary structure comprises 908 residues: MANPQNRVQTERQQNNSSPYLRGDEVHDDPGIALSVFALQEIIRKVRESQTSLRNEGREVNPAPPEIEQIFSALRHLRDERPYRIERTLPTYYRFESSQSQERFFRVDSHFERIAAPVDNATLEEPARLMSLVSRRVDAIRDAGSFLLYNAPTHFVDGREIIDADGLGVDVSGPASPRRAEGASPATRQIDQLTVLNQDQEDTMVDTYPGACPDAVFRVHRALTAHVVHHQRDDYRNAMQWLQAYGEYKRIDFSRSLLTDVFSPDTVYIQSYHVPANPQLLWEVPRCGIPNLRAKRVLGVPHGTYITPNPRITSITIASRVTTTTSFAQLLGTIPTAAQMDDVRKIYLALMFPNQILLDIRSEPGHQVDVVAQSVAGVLGKLLFSYGPALFNITPHTPGPLIVHAPLSCKWQPMIRRTIRHGPSGRPLDFVITQGQRAFDCNQLAQNPARGNGYAGWGVDAVGDHPTPYPHVRRRIQYLGYVPEDVIDERFCGDDLRYPLHQTMCEALAISGHVNERNYVEMMRHDHVVRFAHLSQVINRDLVSALSLPDERFNMLAAVFPRDATGPDGPLVLDISYMAIIHAFRLRFLPVSRPERIIYQPMLESVYASHLSLAKLHANNLQTFVTANSESFVEARPLDTWRAVYPRLPEPVRQIFDLTGQHSFVTGSDIGLWLRSPLVQDSLFLLCARTAWQAVDDPADIGFTRDVYIHRQPIPGYPLEDVRQFRRDAVYFTNMLEARPANGNRVILDRAIMQQRAGAGRLRMSIRELLDDGLFVQIGIALRPNYFEHPSRLPPEETLRALPFEYRARARNGPTARVTLQMLRPVSAFFMLYNADEQAFPDEMIDLVPKMSLVSLYIQQPPVERVSYDTALSVINRDFVSFRSRVRLMDLSAAFDAGSQYALPSNAM.

Over residues 1–19 (MANPQNRVQTERQQNNSSP) the composition is skewed to polar residues. The interval 1–25 (MANPQNRVQTERQQNNSSPYLRGDE) is disordered.

Belongs to the orbivirus VP3 family.

It is found in the virion. The sequence is that of Structural core protein VP2 (Segment-2) from Ixodes (gulls).